The primary structure comprises 628 residues: Inactive sodium-dependent neutral amino acid transporter B(0)AT3 (628 aa).

At 1-26 (MAHAPEPDPAACDLGDERPKWDNKAQ) the chain is on the cytoplasmic side. Residues 27-47 (YLLSCTGFAVGLGNIWRFPYL) form a helical membrane-spanning segment. At 48–51 (CQTY) the chain is on the extracellular side. The chain crosses the membrane as a helical span at residues 52–74 (GGGAFLIPYVIALVFEGIPIFHV). Over 75–88 (ELAIGQRLRKGSVG) the chain is Cytoplasmic. The chain crosses the membrane as a helical span at residues 89–111 (VWTAISPYLSGVGLGCVTLSFLI). Topologically, residues 112 to 178 (SLYYNTIVAW…ITADINDSGS (67 aa)) are extracellular. Asn144, Asn168, and Asn174 each carry an N-linked (GlcNAc...) asparagine glycan. A helical transmembrane segment spans residues 179 to 201 (IQWWLLICLAASWAVVYMCVIRG). Residues 202–207 (IETTGK) are Cytoplasmic-facing. Residues 208 to 230 (VIYFTALFPYLVLTIFLIRGLTL) traverse the membrane as a helical segment. The Extracellular segment spans residues 231–253 (PGATKGLIYLFTPNMHILQNPRV). The chain crosses the membrane as a helical span at residues 254–276 (WLDAATQIFFSLSLAFGGHIAFA). The Cytoplasmic segment spans residues 277–288 (SYNSPRNDCQKD). Residues 289–311 (AVVIALVNRMTSLYASIAVFSVL) form a helical membrane-spanning segment. Residues 312–399 (GFKATNDYEH…TETDLHMPGA (88 aa)) are Extracellular-facing. Asn354 carries an N-linked (GlcNAc...) asparagine glycan. The helical transmembrane segment at 400 to 422 (PVWAMLFFGMLFTLGLSTMFGTV) threads the bilayer. Over 423–442 (EAVITPLLDVGVLPRWVPKE) the chain is Cytoplasmic. A helical membrane pass occupies residues 443 to 465 (ALTGLVCLVCFLSATCFTLQSGN). Residues 466–474 (YWLEIFDNF) are Extracellular-facing. Residues 475–497 (AASPNLLMLAFLEVVGVVYVYGM) form a helical membrane-spanning segment. At 498–517 (KRFCDDIAWMTGRRPSPYWR) the chain is on the cytoplasmic side. Residues 518-540 (LTWRVVSPLLLTIFVAYIILLFW) form a helical membrane-spanning segment. The Extracellular segment spans residues 541 to 568 (KPLRYKAWNPKYELFPSRQEKLYPGWAR). Residues 569-591 (AACVLLSLLPVLWVPVAALAQLL) form a helical membrane-spanning segment. The Cytoplasmic segment spans residues 592 to 628 (TRRRRTWRDRDARPDTDMRPDTDTRPDTDMRPDTDMR). Residues 602-628 (DARPDTDMRPDTDTRPDTDMRPDTDMR) form a disordered region.

Belongs to the sodium:neurotransmitter symporter (SNF) (TC 2.A.22) family. SLC6A18 subfamily. In terms of tissue distribution, abundantly expressed in kidney, but not in intestine.

It is found in the membrane. Its function is as follows. Does not show neutral amino acid transporter activity. The chain is Inactive sodium-dependent neutral amino acid transporter B(0)AT3 from Homo sapiens (Human).